Consider the following 262-residue polypeptide: Phosphatidylglycerol--prolipoprotein diacylglyceryl transferase (262 aa).

4 helical membrane-spanning segments follow: residues 17–37, 57–77, 95–115, and 119–139; these read LAIHWYGLMYLIGFALVYALG, LIFYSVLGVVLGGRLGYVLFY, GGMSFHGGLIGVIVVMLLFAH, and LGFFTVSDFIAPLIPLGLAAG. Arginine 140 lines the a 1,2-diacyl-sn-glycero-3-phospho-(1'-sn-glycerol) pocket. 3 consecutive transmembrane segments (helical) span residues 173–193, 200–220, and 227–247; these read PSQLYELGLEGIVLFALLWWY, AGQVSAMFLMGYGAFRFLVEF, and FLGLLAAGLSMGQWLSIPMVL.

It belongs to the Lgt family.

It localises to the cell inner membrane. The enzyme catalyses L-cysteinyl-[prolipoprotein] + a 1,2-diacyl-sn-glycero-3-phospho-(1'-sn-glycerol) = an S-1,2-diacyl-sn-glyceryl-L-cysteinyl-[prolipoprotein] + sn-glycerol 1-phosphate + H(+). The protein operates within protein modification; lipoprotein biosynthesis (diacylglyceryl transfer). Functionally, catalyzes the transfer of the diacylglyceryl group from phosphatidylglycerol to the sulfhydryl group of the N-terminal cysteine of a prolipoprotein, the first step in the formation of mature lipoproteins. The sequence is that of Phosphatidylglycerol--prolipoprotein diacylglyceryl transferase from Bordetella bronchiseptica (strain ATCC BAA-588 / NCTC 13252 / RB50) (Alcaligenes bronchisepticus).